The chain runs to 841 residues: 27S pre-rRNA (guanosine(2922)-2'-O)-methyltransferase (841 aa).

S-adenosyl-L-methionine contacts are provided by Gly-58, Trp-60, Asp-78, Asp-94, and Asp-119. The active-site Proton acceptor is the Lys-159. Residues 360-389 (QEKQRLNVKRERRRKNEMKQKELQRMQMNM) are a coiled coil. Phosphoserine is present on residues Ser-455 and Ser-464. 2 disordered regions span residues 480–534 (RDAK…DDEA) and 565–654 (NNVE…HSRD). The span at 505–517 (SLEKKEEEGKDYI) shows a compositional bias: basic and acidic residues. Acidic residues predominate over residues 518 to 534 (EDNDDEGVEGDSDDDEA). Position 529 is a phosphoserine (Ser-529). Over residues 574–585 (NTVNDGIMSSES) the composition is skewed to polar residues. A compositionally biased stretch (basic and acidic residues) spans 598–607 (HEEMHQKQDE). Composition is skewed to acidic residues over residues 608–621 (ADSS…DSDF) and 629–641 (ASEE…DSEE). Residues 642 to 654 (EKNQTKKEKHSRD) are compositionally biased toward basic and acidic residues.

The protein belongs to the class I-like SAM-binding methyltransferase superfamily. RNA methyltransferase RlmE family. SPB1 subfamily. Component of the nucleolar and nucleoplasmic pre-60S ribosomal particle. Interacts with the snoRNA-associated proteins NOP1 and NOP58.

It localises to the nucleus. The protein resides in the nucleolus. It catalyses the reaction guanosine(2922) in 27S pre-rRNA + S-adenosyl-L-methionine = 2'-O-methylguanosine(2922) in 27S pre-rRNA + S-adenosyl-L-homocysteine + H(+). In terms of biological role, required for proper assembly of pre-ribosomal particles during the biogenesis of the 60S ribosomal subunit. Specifically methylates the guanosine in position 2922 of the 25S rRNA at the stage of 27S pre-rRNA maturation. Also methylates the uridine in position 2921 in the absence of methylation of this residue guided by snoRNA snR52 at the stage of 35S pre-rRNA maturation. The chain is 27S pre-rRNA (guanosine(2922)-2'-O)-methyltransferase from Saccharomyces cerevisiae (strain ATCC 204508 / S288c) (Baker's yeast).